The following is a 317-amino-acid chain: Aspartate carbamoyltransferase catalytic subunit (317 aa).

Carbamoyl phosphate-binding residues include R66 and T67. Residue K94 coordinates L-aspartate. Residues R116, H144, and Q147 each contribute to the carbamoyl phosphate site. L-aspartate-binding residues include R177 and R231. 2 residues coordinate carbamoyl phosphate: G272 and P273.

It belongs to the aspartate/ornithine carbamoyltransferase superfamily. ATCase family. In terms of assembly, heterododecamer (2C3:3R2) of six catalytic PyrB chains organized as two trimers (C3), and six regulatory PyrI chains organized as three dimers (R2).

The enzyme catalyses carbamoyl phosphate + L-aspartate = N-carbamoyl-L-aspartate + phosphate + H(+). It functions in the pathway pyrimidine metabolism; UMP biosynthesis via de novo pathway; (S)-dihydroorotate from bicarbonate: step 2/3. Its function is as follows. Catalyzes the condensation of carbamoyl phosphate and aspartate to form carbamoyl aspartate and inorganic phosphate, the committed step in the de novo pyrimidine nucleotide biosynthesis pathway. The polypeptide is Aspartate carbamoyltransferase catalytic subunit (Beijerinckia indica subsp. indica (strain ATCC 9039 / DSM 1715 / NCIMB 8712)).